A 343-amino-acid chain; its full sequence is 2,3,4,5-tetrahydropyridine-2,6-dicarboxylate N-succinyltransferase (343 aa).

Glutamate 204 provides a ligand contact to Mg(2+). Glutamate 220 acts as the Acyl-anhydride intermediate in catalysis. Succinyl-CoA contacts are provided by residues arginine 222, glycine 237, serine 240, alanine 263, 278-279 (ES), glycine 286, lysine 303, and 316-319 (RRNS).

This sequence belongs to the type 2 tetrahydrodipicolinate N-succinyltransferase family. As to quaternary structure, homotrimer.

It localises to the cytoplasm. The catalysed reaction is (S)-2,3,4,5-tetrahydrodipicolinate + succinyl-CoA + H2O = (S)-2-succinylamino-6-oxoheptanedioate + CoA. It participates in amino-acid biosynthesis; L-lysine biosynthesis via DAP pathway; LL-2,6-diaminopimelate from (S)-tetrahydrodipicolinate (succinylase route): step 1/3. Catalyzes the conversion of the cyclic tetrahydrodipicolinate (THDP) into the acyclic N-succinyl-L-2-amino-6-oxopimelate using succinyl-CoA. This Vibrio cholerae serotype O1 (strain ATCC 39315 / El Tor Inaba N16961) protein is 2,3,4,5-tetrahydropyridine-2,6-dicarboxylate N-succinyltransferase.